A 106-amino-acid polypeptide reads, in one-letter code: Iron-sulfur cluster assembly protein CyaY (106 aa).

Belongs to the frataxin family.

Involved in iron-sulfur (Fe-S) cluster assembly. May act as a regulator of Fe-S biogenesis. The protein is Iron-sulfur cluster assembly protein CyaY of Escherichia coli (strain SMS-3-5 / SECEC).